The following is a 279-amino-acid chain: 4-diphosphocytidyl-2-C-methyl-D-erythritol kinase (279 aa).

The active site involves Lys-11. 95 to 105 (PVAAGLGGGSS) provides a ligand contact to ATP. The active site involves Asp-137.

It belongs to the GHMP kinase family. IspE subfamily.

It carries out the reaction 4-CDP-2-C-methyl-D-erythritol + ATP = 4-CDP-2-C-methyl-D-erythritol 2-phosphate + ADP + H(+). The protein operates within isoprenoid biosynthesis; isopentenyl diphosphate biosynthesis via DXP pathway; isopentenyl diphosphate from 1-deoxy-D-xylulose 5-phosphate: step 3/6. Catalyzes the phosphorylation of the position 2 hydroxy group of 4-diphosphocytidyl-2C-methyl-D-erythritol. This Geotalea daltonii (strain DSM 22248 / JCM 15807 / FRC-32) (Geobacter daltonii) protein is 4-diphosphocytidyl-2-C-methyl-D-erythritol kinase.